Consider the following 481-residue polypeptide: Proton-coupled amino acid transporter 2 (481 aa).

Residues 1 to 56 (MSVTKSAGSPQVAATVKLDLVSFPESAKKVQSQDPNPVNGSSSESSEKTKGITGFQ) lie on the Cytoplasmic side of the membrane. Residues 26–49 (SAKKVQSQDPNPVNGSSSESSEKT) form a disordered region. The span at 29 to 40 (KVQSQDPNPVNG) shows a compositional bias: polar residues. Residues 57 to 77 (TLVHLVKGNMGTGILGLPLAV) form a helical membrane-spanning segment. Residues 78–79 (KN) lie on the Extracellular side of the membrane. A helical transmembrane segment spans residues 80–100 (AGILMGPLSLLVMGLIACHCM). Topologically, residues 101–146 (HILVRCAQRFCHRLNKPFMDYGDTVMHGLASSPNTWLQSHAHWGRH) are cytoplasmic. Residues 147–167 (AVSFFLIVTQLGFCCVYIVFL) traverse the membrane as a helical segment. The Extracellular segment spans residues 168 to 195 (ADNLKQVVEAVNSTTISCHKNETVVLTP). A helical transmembrane segment spans residues 196 to 216 (TIDSRLYMLAFLPVLGLLVFI). Over 217–220 (RNLR) the chain is Cytoplasmic. A helical membrane pass occupies residues 221–241 (VLTIFSLLANVSMLVSLVIIG). The Extracellular segment spans residues 242–262 (QYIIQGIPDPSQLPLVASWKT). Residues 263–283 (YPLFFGTAIFSFESIGVVLPL) traverse the membrane as a helical segment. Residues 284–295 (ENKMKDARRFPT) are Cytoplasmic-facing. A helical membrane pass occupies residues 296 to 316 (ILSLGMSIITTLYIAIGALGY). Over 317–343 (LRFGDDIKASITLNLPNCWLYQSVKLL) the chain is Extracellular. Residues 344 to 364 (YVVGILCTHALQFYVPAEIII) traverse the membrane as a helical segment. Topologically, residues 365 to 377 (PLAVSQVSKRWAL) are cytoplasmic. A helical transmembrane segment spans residues 378–398 (PVDLSIRLALVCVTCMLAILI). At 399 to 402 (PRLD) the chain is on the extracellular side. Residues 403–423 (LVLSLVGSVSSSALALIIPPL) traverse the membrane as a helical segment. At 424–444 (LEVTTYYGEGMSPLTITKDAL) the chain is on the cytoplasmic side. A helical transmembrane segment spans residues 445–465 (ISILGFMGFVVGTYQALDELI). Residues 466–481 (RSGNSLPLSNSTMFIQ) lie on the Extracellular side of the membrane.

Belongs to the amino acid/polyamine transporter 2 family. In terms of tissue distribution, expressed in lung and spleen, and to a lower extent in brain, heart, kidney and skeletal muscle.

The protein localises to the cell membrane. It localises to the endoplasmic reticulum membrane. Its subcellular location is the recycling endosome membrane. The enzyme catalyses glycine(in) + H(+)(in) = glycine(out) + H(+)(out). It catalyses the reaction L-alanine(in) + H(+)(in) = L-alanine(out) + H(+)(out). It carries out the reaction D-alanine(in) + H(+)(in) = D-alanine(out) + H(+)(out). The catalysed reaction is L-proline(out) + H(+)(out) = L-proline(in) + H(+)(in). The enzyme catalyses D-proline(out) + H(+)(out) = D-proline(in) + H(+)(in). It catalyses the reaction 4-hydroxy-L-proline(in) + H(+)(in) = 4-hydroxy-L-proline(out) + H(+)(out). It carries out the reaction L-serine(in) + H(+)(in) = L-serine(out) + H(+)(out). The catalysed reaction is D-serine(out) + H(+)(out) = D-serine(in) + H(+)(in). The enzyme catalyses beta-alanine(in) + H(+)(in) = beta-alanine(out) + H(+)(out). It catalyses the reaction 4-aminobutanoate(in) + H(+)(in) = 4-aminobutanoate(out) + H(+)(out). It carries out the reaction sarcosine(in) + H(+)(in) = sarcosine(out) + H(+)(out). The catalysed reaction is N,N-dimethylglycine(in) + H(+)(in) = N,N-dimethylglycine(out) + H(+)(out). Its activity is regulated as follows. Inhibited by L- and D-pipecolic acid, nipecotic acid, isonipecotic acid, L- and D-cycloserine, and L-2-azetidine-carboxylate. Functionally, electrogenic proton/amino acid symporter with a high selectivity for the small side chains amino acids glycine, alanine and proline, where both L- and D-enantiomers are transported. Extension of the backbone length, as in beta-alanine and 4-aminobutanoate or methylation of the amino group, as in sarcosine and N,N-dimethylglycine, are also tolerated but decrease transport efficiency. A free carboxyl group is preferred. In Rattus norvegicus (Rat), this protein is Proton-coupled amino acid transporter 2.